Reading from the N-terminus, the 449-residue chain is Protein translocase subunit SecD (449 aa).

A run of 6 helical transmembrane segments spans residues 6 to 26 (GLVF…VLPT), 272 to 292 (LAVK…IAFY), 294 to 314 (LPGL…LALF), 317 to 337 (VPVT…GMAV), 379 to 399 (TFIA…GAPV), and 401 to 421 (GFAV…IFVT).

It belongs to the SecD/SecF family. SecD subfamily. Forms a complex with SecF. Part of the essential Sec protein translocation apparatus which comprises SecA, SecYEG and auxiliary proteins SecDF. Other proteins may also be involved.

The protein localises to the cell membrane. Its function is as follows. Part of the Sec protein translocase complex. Interacts with the SecYEG preprotein conducting channel. SecDF uses the proton motive force (PMF) to complete protein translocation after the ATP-dependent function of SecA. The chain is Protein translocase subunit SecD from Dehalococcoides mccartyi (strain VS).